The sequence spans 228 residues: Probable septum site-determining protein MinC (228 aa).

The protein belongs to the MinC family. As to quaternary structure, interacts with MinD and FtsZ.

In terms of biological role, cell division inhibitor that blocks the formation of polar Z ring septums. Rapidly oscillates between the poles of the cell to destabilize FtsZ filaments that have formed before they mature into polar Z rings. Prevents FtsZ polymerization. The polypeptide is Probable septum site-determining protein MinC (Bacillus mycoides (strain KBAB4) (Bacillus weihenstephanensis)).